The primary structure comprises 238 residues: Ribonuclease PH (238 aa).

Phosphate-binding positions include arginine 86 and 124 to 126; that span reads GTR.

Belongs to the RNase PH family. As to quaternary structure, homohexameric ring arranged as a trimer of dimers.

It catalyses the reaction tRNA(n+1) + phosphate = tRNA(n) + a ribonucleoside 5'-diphosphate. Its function is as follows. Phosphorolytic 3'-5' exoribonuclease that plays an important role in tRNA 3'-end maturation. Removes nucleotide residues following the 3'-CCA terminus of tRNAs; can also add nucleotides to the ends of RNA molecules by using nucleoside diphosphates as substrates, but this may not be physiologically important. Probably plays a role in initiation of 16S rRNA degradation (leading to ribosome degradation) during starvation. This is Ribonuclease PH from Mannheimia haemolytica (Pasteurella haemolytica).